Here is a 383-residue protein sequence, read N- to C-terminus: Caspase a (383 aa).

The propeptide occupies 1–142 (MAKSIKDHLQ…ETYEIKDKSV (142 aa)). The 74-residue stretch at 8–81 (HLQDALSNIG…RGIKCNAVAE (74 aa)) folds into the Pyrin domain. A disordered region spans residues 87–106 (TGQGGVSQPEPPVPEPIPKD). Active-site residues include H220 and C270. Positions 275 to 296 (HGRVWASDGEPDEPIEIEDDDF) are excised as a propeptide.

It belongs to the peptidase C14A family. As to quaternary structure, heterotetramer that consists of two anti-parallel arranged heterodimers, each one formed by a 20 kDa (p20) and a 10 kDa (p10) subunit. Interacts (via pyrin domain) with pycard (via pyrin domain). Interacts with caspb. Component of NLRP1 inflammasomes. Inflammasomes are supramolecular complexes that assemble in the cytosol in response to pathogens and other damage-associated signals and play critical roles in innate immunity and inflammation. The NLRP1 inflammasome is composed of the signal sensor nlrp1, and the adapter pycard (asc), which recruit effector pro-inflammatory caspases caspa and/or caspb. The interaction between nlrp1 and pycard is required for the sequential recruitment of caspa and then caspb. Caspa is preferentially recruited first and this causes the cleavage of pro-il1b into the midformed il1b. This is followed by the recruitment of caspb, which is activated and cleaves the midformed il1b resulting in il1b maturation. Interacts with caiap. The two subunits are derived from the precursor sequence by an autocatalytic mechanism.

It is found in the inflammasome. Its subcellular location is the cytoplasm. It catalyses the reaction Strict requirement for an Asp residue at position P1 and has a preferred cleavage sequence of Tyr-Val-Ala-Asp-|-.. Thiol protease which cleaves IL-1 beta (il1b), releasing the mature cytokine which is involved in a variety of inflammatory processes, and mediates apoptosis. Component of the NLRP1 inflammasome, which plays a crucial role in innate immunity and inflammation. In response to pathogens and other damage-associated signals, recruited to the NLRP1 inflammasome in its precursor form. Its subsequent activation causes the cleavage of pro-il1b into the midformed il1b, which then evetually leads to il1b maturation and secretion in the extracellular milieu. Required for the development of the cartilaginous pharyngeal skeleton. In Danio rerio (Zebrafish), this protein is Caspase a.